The chain runs to 209 residues: Probable GTP-binding protein EngB (209 aa).

One can recognise an EngB-type G domain in the interval 12-203 (INLEIIFAGR…RDRLHEMKRD (192 aa)). GTP is bound by residues 20-27 (GRSNVGKS), 45-49 (GVTLR), 62-65 (DMPG), 142-145 (NKMD), and 179-181 (ISA). Residues S27 and T47 each coordinate Mg(2+).

Belongs to the TRAFAC class TrmE-Era-EngA-EngB-Septin-like GTPase superfamily. EngB GTPase family. Requires Mg(2+) as cofactor.

Functionally, necessary for normal cell division and for the maintenance of normal septation. In Methanosarcina mazei (strain ATCC BAA-159 / DSM 3647 / Goe1 / Go1 / JCM 11833 / OCM 88) (Methanosarcina frisia), this protein is Probable GTP-binding protein EngB.